A 392-amino-acid polypeptide reads, in one-letter code: ATP-dependent RNA helicase eIF4A (392 aa).

The short motif at 19–47 (DTFDDMNLKPELLRGIYAYGFERPSAIQQ) is the Q motif element. In terms of domain architecture, Helicase ATP-binding spans 50 to 220 (IMPILGERDV…TKFMRDPIRI (171 aa)). An ATP-binding site is contributed by 63-70 (AQSGTGKT). Position 65 is a phosphoserine (S65). A DEAD box motif is present at residues 168 to 171 (DEAD). Positions 231–392 (GIKQFYVAVE…EMPMNIADLI (162 aa)) constitute a Helicase C-terminal domain.

Belongs to the DEAD box helicase family. eIF4A subfamily. In terms of assembly, component of the eIF4F complex, which composition varies with external and internal environmental conditions. It is composed of at least eIF4A, eIF4E and eIF4G.

It is found in the cytoplasm. The enzyme catalyses ATP + H2O = ADP + phosphate + H(+). Functionally, ATP-dependent RNA helicase which is a subunit of the eIF4F complex involved in cap recognition and is required for mRNA binding to ribosome. In the current model of translation initiation, eIF4A unwinds RNA secondary structures in the 5'-UTR of mRNAs which is necessary to allow efficient binding of the small ribosomal subunit, and subsequent scanning for the initiator codon. The sequence is that of ATP-dependent RNA helicase eIF4A (tif1) from Schizosaccharomyces pombe (strain 972 / ATCC 24843) (Fission yeast).